A 494-amino-acid polypeptide reads, in one-letter code: Glycerol kinase (494 aa).

Residue Thr-13 participates in ADP binding. ATP is bound by residues Thr-13, Thr-14, and Ser-15. Thr-13 lines the sn-glycerol 3-phosphate pocket. Arg-17 is an ADP binding site. Positions 83, 84, 135, and 244 each coordinate sn-glycerol 3-phosphate. Positions 83, 84, 135, 244, and 245 each coordinate glycerol. Residues Thr-266 and Gly-309 each contribute to the ADP site. Positions 266, 309, 313, and 410 each coordinate ATP. Residues Gly-410 and Asn-414 each coordinate ADP.

It belongs to the FGGY kinase family.

The catalysed reaction is glycerol + ATP = sn-glycerol 3-phosphate + ADP + H(+). The protein operates within polyol metabolism; glycerol degradation via glycerol kinase pathway; sn-glycerol 3-phosphate from glycerol: step 1/1. Its activity is regulated as follows. Inhibited by fructose 1,6-bisphosphate (FBP). In terms of biological role, key enzyme in the regulation of glycerol uptake and metabolism. Catalyzes the phosphorylation of glycerol to yield sn-glycerol 3-phosphate. The chain is Glycerol kinase from Shewanella sp. (strain MR-4).